A 469-amino-acid polypeptide reads, in one-letter code: Glutamate--tRNA ligase 1 (469 aa).

Positions 8-18 match the 'HIGH' region motif; it reads PSPTGYLHIGG. The interval 117-137 is disordered; that stretch reads TPRYDGTWRPEPGKELPPVPA. The short motif at 240–244 is the 'KMSKS' region element; it reads KLSKR. Position 243 (K243) interacts with ATP.

It belongs to the class-I aminoacyl-tRNA synthetase family. Glutamate--tRNA ligase type 1 subfamily. Monomer.

The protein resides in the cytoplasm. It carries out the reaction tRNA(Glu) + L-glutamate + ATP = L-glutamyl-tRNA(Glu) + AMP + diphosphate. Catalyzes the attachment of glutamate to tRNA(Glu) in a two-step reaction: glutamate is first activated by ATP to form Glu-AMP and then transferred to the acceptor end of tRNA(Glu). This Aliarcobacter butzleri (strain RM4018) (Arcobacter butzleri) protein is Glutamate--tRNA ligase 1.